Consider the following 179-residue polypeptide: Ribosome maturation factor RimM (179 aa).

Residues 95-174 (KDEFFYFDIL…QIFCTQDAFL (80 aa)) form the PRC barrel domain.

This sequence belongs to the RimM family. Binds ribosomal protein uS19.

It localises to the cytoplasm. In terms of biological role, an accessory protein needed during the final step in the assembly of 30S ribosomal subunit, possibly for assembly of the head region. Essential for efficient processing of 16S rRNA. May be needed both before and after RbfA during the maturation of 16S rRNA. It has affinity for free ribosomal 30S subunits but not for 70S ribosomes. This is Ribosome maturation factor RimM from Campylobacter jejuni subsp. jejuni serotype O:6 (strain 81116 / NCTC 11828).